The primary structure comprises 209 residues: Probable nicotinate-nucleotide adenylyltransferase (209 aa).

The protein belongs to the NadD family.

The enzyme catalyses nicotinate beta-D-ribonucleotide + ATP + H(+) = deamido-NAD(+) + diphosphate. It participates in cofactor biosynthesis; NAD(+) biosynthesis; deamido-NAD(+) from nicotinate D-ribonucleotide: step 1/1. Catalyzes the reversible adenylation of nicotinate mononucleotide (NaMN) to nicotinic acid adenine dinucleotide (NaAD). This Streptococcus pneumoniae serotype 4 (strain ATCC BAA-334 / TIGR4) protein is Probable nicotinate-nucleotide adenylyltransferase.